The chain runs to 783 residues: DNA ligase (783 aa).

Residues Asp42–Asp46, Ser91–Leu92, and Glu125 contribute to the NAD(+) site. The active-site N6-AMP-lysine intermediate is the Lys127. 4 residues coordinate NAD(+): Arg148, Glu185, Lys302, and Lys326. 4 residues coordinate Zn(2+): Cys421, Cys423, Cys445, and Cys451. The BRCT domain maps to Lys705–Gly783.

This sequence belongs to the NAD-dependent DNA ligase family. LigA subfamily. It depends on Mg(2+) as a cofactor. Requires Mn(2+) as cofactor.

The catalysed reaction is NAD(+) + (deoxyribonucleotide)n-3'-hydroxyl + 5'-phospho-(deoxyribonucleotide)m = (deoxyribonucleotide)n+m + AMP + beta-nicotinamide D-nucleotide.. In terms of biological role, DNA ligase that catalyzes the formation of phosphodiester linkages between 5'-phosphoryl and 3'-hydroxyl groups in double-stranded DNA using NAD as a coenzyme and as the energy source for the reaction. It is essential for DNA replication and repair of damaged DNA. This is DNA ligase from Caulobacter vibrioides (strain ATCC 19089 / CIP 103742 / CB 15) (Caulobacter crescentus).